Consider the following 153-residue polypeptide: 6,7-dimethyl-8-ribityllumazine synthase (153 aa).

5-amino-6-(D-ribitylamino)uracil-binding positions include Phe21, 55-57, and 79-81; these read AFE and CVI. Residue 84-85 coordinates (2S)-2-hydroxy-3-oxobutyl phosphate; that stretch reads AT. His87 acts as the Proton donor in catalysis. Residue Phe112 coordinates 5-amino-6-(D-ribitylamino)uracil. Arg126 contributes to the (2S)-2-hydroxy-3-oxobutyl phosphate binding site.

Belongs to the DMRL synthase family. As to quaternary structure, forms an icosahedral capsid composed of 60 subunits, arranged as a dodecamer of pentamers.

It carries out the reaction (2S)-2-hydroxy-3-oxobutyl phosphate + 5-amino-6-(D-ribitylamino)uracil = 6,7-dimethyl-8-(1-D-ribityl)lumazine + phosphate + 2 H2O + H(+). The protein operates within cofactor biosynthesis; riboflavin biosynthesis; riboflavin from 2-hydroxy-3-oxobutyl phosphate and 5-amino-6-(D-ribitylamino)uracil: step 1/2. Its function is as follows. Catalyzes the formation of 6,7-dimethyl-8-ribityllumazine by condensation of 5-amino-6-(D-ribitylamino)uracil with 3,4-dihydroxy-2-butanone 4-phosphate. This is the penultimate step in the biosynthesis of riboflavin. The sequence is that of 6,7-dimethyl-8-ribityllumazine synthase from Staphylococcus epidermidis (strain ATCC 35984 / DSM 28319 / BCRC 17069 / CCUG 31568 / BM 3577 / RP62A).